The following is a 345-amino-acid chain: NADH-quinone oxidoreductase subunit H (345 aa).

8 helical membrane-spanning segments follow: residues 13 to 33 (VLII…LLFL), 84 to 104 (FMLA…VIPF), 115 to 135 (VAIL…IMGG), 161 to 181 (IGLI…SAIV), 190 to 210 (FFSW…ISAL), 248 to 268 (YIAI…GWLS), 278 to 298 (IWMV…KAIV), and 309 to 329 (LGWK…AFAA).

Belongs to the complex I subunit 1 family. NDH-1 is composed of 14 different subunits. Subunits NuoA, H, J, K, L, M, N constitute the membrane sector of the complex.

The protein resides in the cell inner membrane. The enzyme catalyses a quinone + NADH + 5 H(+)(in) = a quinol + NAD(+) + 4 H(+)(out). NDH-1 shuttles electrons from NADH, via FMN and iron-sulfur (Fe-S) centers, to quinones in the respiratory chain. The immediate electron acceptor for the enzyme in this species is believed to be ubiquinone. Couples the redox reaction to proton translocation (for every two electrons transferred, four hydrogen ions are translocated across the cytoplasmic membrane), and thus conserves the redox energy in a proton gradient. This subunit may bind ubiquinone. The sequence is that of NADH-quinone oxidoreductase subunit H from Dinoroseobacter shibae (strain DSM 16493 / NCIMB 14021 / DFL 12).